Consider the following 563-residue polypeptide: Putative cysteine ligase BshC (563 aa).

Positions 493 to 518 (KEKTYRAGRRKHDELLQQLDKAELNL) form a coiled coil.

This sequence belongs to the BshC family.

The protein is Putative cysteine ligase BshC of Chlorobaculum tepidum (strain ATCC 49652 / DSM 12025 / NBRC 103806 / TLS) (Chlorobium tepidum).